A 382-amino-acid polypeptide reads, in one-letter code: uncharacterized protein (382 aa).

This is an uncharacterized protein from Bacillus subtilis (strain 168).